We begin with the raw amino-acid sequence, 314 residues long: DNA-directed RNA polymerase subunit alpha (314 aa).

The interval 1-228 (MIEIEKPKIE…EHLNIFVGLT (228 aa)) is alpha N-terminal domain (alpha-NTD). The segment at 245 to 314 (KEKVLEMTIE…ELGLGLRKDD (70 aa)) is alpha C-terminal domain (alpha-CTD).

Belongs to the RNA polymerase alpha chain family. In terms of assembly, homodimer. The RNAP catalytic core consists of 2 alpha, 1 beta, 1 beta' and 1 omega subunit. When a sigma factor is associated with the core the holoenzyme is formed, which can initiate transcription.

The catalysed reaction is RNA(n) + a ribonucleoside 5'-triphosphate = RNA(n+1) + diphosphate. DNA-dependent RNA polymerase catalyzes the transcription of DNA into RNA using the four ribonucleoside triphosphates as substrates. This is DNA-directed RNA polymerase subunit alpha from Bacillus licheniformis (strain ATCC 14580 / DSM 13 / JCM 2505 / CCUG 7422 / NBRC 12200 / NCIMB 9375 / NCTC 10341 / NRRL NRS-1264 / Gibson 46).